Consider the following 155-residue polypeptide: Ribosome maturation factor RimP (155 aa).

The protein belongs to the RimP family.

Its subcellular location is the cytoplasm. Required for maturation of 30S ribosomal subunits. In Synechococcus sp. (strain RCC307), this protein is Ribosome maturation factor RimP.